Here is a 436-residue protein sequence, read N- to C-terminus: EPS I polysaccharide export inner membrane protein EpsE (436 aa).

12 helical membrane passes run 20–40 (VLGLGAAVASRGAVFVSNILL), 49–69 (FGLFSYAYVTALNLGLFLATG), 91–111 (LCAFIVLLMALIAVAAAALYL), 133–153 (AAIVLIATAFTQALQSFQYAM), 160–180 (ATISIGAAVLLLTMLWAMGPI), 185–205 (LALTIFLAVNAGAAVSQLLVL), 234–254 (VLTTSMGAPVHWICLSMLAAM), 261–281 (LALFSVAFQWYIAITFIPATL), 307–327 (ALLFGGGLSLALGCASFLLAG), 341–361 (AASSMRSLSVAAALCGVSVLL), 375–395 (FAMAAVYSVIYVAASYLALRL), and 396–416 (GFGATSIGLAMSAAYCCLILF).

To E.coli bicyclomycin resistance protein (BCR).

It is found in the cell inner membrane. In terms of biological role, probably involved in polymerization and/or export of exopolysaccharide EPS I which functions as a virulence factor. May play a role in export of EPS I or its intermediates across the membranes. The chain is EPS I polysaccharide export inner membrane protein EpsE (epsE) from Ralstonia solanacearum (Pseudomonas solanacearum).